The chain runs to 319 residues: ATP-dependent 6-phosphofructokinase (319 aa).

ATP is bound at residue Gly11. Residue 21-25 (RAVVR) coordinates ADP. ATP is bound by residues 72–73 (RC) and 102–105 (GDGS). Asp103 is a Mg(2+) binding site. Substrate is bound at residue 125 to 127 (TID). Asp127 acts as the Proton acceptor in catalysis. Arg154 contacts ADP. Substrate is bound by residues Arg162 and 169–171 (MGR). Residues 185 to 187 (GAE), Lys211, and 213 to 215 (KMH) each bind ADP. Residues Glu222, Arg243, and 249-252 (HIQR) each bind substrate.

This sequence belongs to the phosphofructokinase type A (PFKA) family. ATP-dependent PFK group I subfamily. Prokaryotic clade 'B1' sub-subfamily. As to quaternary structure, homotetramer. Requires Mg(2+) as cofactor.

It is found in the cytoplasm. The catalysed reaction is beta-D-fructose 6-phosphate + ATP = beta-D-fructose 1,6-bisphosphate + ADP + H(+). The protein operates within carbohydrate degradation; glycolysis; D-glyceraldehyde 3-phosphate and glycerone phosphate from D-glucose: step 3/4. Its activity is regulated as follows. Allosterically activated by ADP and other diphosphonucleosides, and allosterically inhibited by phosphoenolpyruvate. Functionally, catalyzes the phosphorylation of D-fructose 6-phosphate to fructose 1,6-bisphosphate by ATP, the first committing step of glycolysis. This Clostridium botulinum (strain ATCC 19397 / Type A) protein is ATP-dependent 6-phosphofructokinase.